The following is a 580-amino-acid chain: Acyl--CoA ligase GME11374 (580 aa).

This sequence belongs to the ATP-dependent AMP-binding enzyme family.

It participates in secondary metabolite biosynthesis. In terms of biological role, acyl--CoA ligase; part of the gene cluster that mediates the biosynthesis of dibenzodioxocinones such as pestalotiollide B, a novel class of inhibitors against cholesterol ester transfer protein (CEPT). The biosynthesis initiates from condensation of acetate and malonate units catalyzed by the non-reducing PKS pks8/GME11356. Pks8/GME11356 lacks a thioesterase (TE) domain, which is important to the cyclizing of the third ring of atrochrysone carboxylic acid, and the esterase GME11355 might play the role of TE and catalyzes the cyclization reaction of the C ring. The lactamase-like protein GME11357 (or other beta-lactamases in Pestalotiopsis microspora) probably hydrolyzes the thioester bond between the ACP of pks8/GME11356 and the intermediate to release atrochrysone carboxylic acid, which is spontaneously dehydrates to form endocrocin anthrone. Endocrocin anthrone is further converted to emodin via the endocrocin intermediate. Emodin is then oxidized by several enzymes such as the Baeyer-Villiger oxidase GME11358, the oxidoreductase GME11367, the short chain dehydrogenase/reductase GME11373, as well as by other oxidoreductases from the cluster, to modify the A and C rings and open the B ring, and finally yield monodictyphenone. The prenyltransferase GME11375 may catalyze the addition reaction between the C5 side chains and the carbon bone of dibenzodioxocinones. The remaining biochemical reactions to the final product dibenzodioxocinones should be methylation catalyzed by methyltransferase GME11366 and reduction and lactonization reaction catalyzed by a series of oxidordeuctases. This is Acyl--CoA ligase GME11374 from Pestalotiopsis microspora.